The primary structure comprises 180 residues: Adenine phosphoribosyltransferase (180 aa).

An N-acetylserine modification is found at S2. Phosphoserine occurs at positions 4, 15, and 30. Phosphotyrosine is present on Y60. A Phosphoserine modification is found at S66. K114 bears the N6-acetyllysine mark. At T135 the chain carries Phosphothreonine.

The protein belongs to the purine/pyrimidine phosphoribosyltransferase family. As to quaternary structure, homodimer.

Its subcellular location is the cytoplasm. The catalysed reaction is AMP + diphosphate = 5-phospho-alpha-D-ribose 1-diphosphate + adenine. Its pathway is purine metabolism; AMP biosynthesis via salvage pathway; AMP from adenine: step 1/1. Functionally, catalyzes a salvage reaction resulting in the formation of AMP, that is energically less costly than de novo synthesis. In Rattus norvegicus (Rat), this protein is Adenine phosphoribosyltransferase.